The sequence spans 406 residues: Probable tRNA pseudouridine synthase D (406 aa).

Aspartate 77 acts as the Nucleophile in catalysis. Residues 150–371 (GFPNYFGIQR…PGGRRELLIK (222 aa)) enclose the TRUD domain.

The protein belongs to the pseudouridine synthase TruD family.

It catalyses the reaction uridine(13) in tRNA = pseudouridine(13) in tRNA. Functionally, could be responsible for synthesis of pseudouridine from uracil-13 in transfer RNAs. The sequence is that of Probable tRNA pseudouridine synthase D from Pyrococcus abyssi (strain GE5 / Orsay).